A 94-amino-acid chain; its full sequence is Large ribosomal subunit protein uL23 (94 aa).

Belongs to the universal ribosomal protein uL23 family. As to quaternary structure, part of the 50S ribosomal subunit. Contacts protein L29, and trigger factor when it is bound to the ribosome.

Functionally, one of the early assembly proteins it binds 23S rRNA. One of the proteins that surrounds the polypeptide exit tunnel on the outside of the ribosome. Forms the main docking site for trigger factor binding to the ribosome. In Geobacter sulfurreducens (strain ATCC 51573 / DSM 12127 / PCA), this protein is Large ribosomal subunit protein uL23.